A 434-amino-acid polypeptide reads, in one-letter code: Glutamyl-tRNA reductase (434 aa).

Substrate contacts are provided by residues T49–R52, S107, E112–Q114, and Q118. The Nucleophile role is filled by C50. G187–V192 contributes to the NADP(+) binding site.

This sequence belongs to the glutamyl-tRNA reductase family. As to quaternary structure, homodimer.

It carries out the reaction (S)-4-amino-5-oxopentanoate + tRNA(Glu) + NADP(+) = L-glutamyl-tRNA(Glu) + NADPH + H(+). Its pathway is porphyrin-containing compound metabolism; protoporphyrin-IX biosynthesis; 5-aminolevulinate from L-glutamyl-tRNA(Glu): step 1/2. Catalyzes the NADPH-dependent reduction of glutamyl-tRNA(Glu) to glutamate 1-semialdehyde (GSA). This is Glutamyl-tRNA reductase from Hydrogenovibrio crunogenus (strain DSM 25203 / XCL-2) (Thiomicrospira crunogena).